Here is a 77-residue protein sequence, read N- to C-terminus: Large ribosomal subunit protein uL24c (77 aa).

This sequence belongs to the universal ribosomal protein uL24 family. Part of the 50S ribosomal subunit.

It is found in the plastid. Its subcellular location is the chloroplast. In terms of biological role, one of two assembly initiator proteins, it binds directly to the 5'-end of the 23S rRNA, where it nucleates assembly of the 50S subunit. In Thalassiosira pseudonana (Marine diatom), this protein is Large ribosomal subunit protein uL24c (rpl24).